The primary structure comprises 62 residues: DNA-binding protein 7b (62 aa).

It belongs to the 7 kDa DNA-binding/endoribonuclease P2 family. As to quaternary structure, monomer.

Its subcellular location is the cytoplasm. Functionally, can constrain negative DNA supercoils. May be involved in maintaining the integrity of the genome at high temperature. The polypeptide is DNA-binding protein 7b (Acidianus hospitalis (strain W1)).